A 365-amino-acid chain; its full sequence is Snurportin-1 (365 aa).

The region spanning 10–72 (GGVALAAPNS…RLAEGDWAGV (63 aa)) is the IBB domain. Disordered stretches follow at residues 15–34 (AAPNSPAAPHPRLSAYKGRG) and 69–90 (WAGVESDEDGGEDGDGEEEMEV). A compositionally biased stretch (acidic residues) spans 73–90 (ESDEDGGEDGDGEEEMEV). Residues 129–131 (GKR) are interaction with m3G-cap structure. A necessary for binding to the m3G-cap structure region spans residues 211–333 (LSSKIQEEEG…GKAQPSAEAA (123 aa)). The segment at 317–365 (RSKKLAAGKAQPSAEAAARNGHYELEHLSTPQPANSAQGQEEAGSQMEN) is disordered. A compositionally biased stretch (polar residues) spans 345-355 (STPQPANSAQG).

This sequence belongs to the snurportin family.

The protein resides in the nucleus. Its subcellular location is the cytoplasm. Functions as an U snRNP-specific nuclear import adapter. Involved in the trimethylguanosine (m3G)-cap-dependent nuclear import of U snRNPs. Binds specifically to the terminal m3G-cap U snRNAs. The protein is Snurportin-1 (SNUPN) of Gallus gallus (Chicken).